Here is a 233-residue protein sequence, read N- to C-terminus: Mediator of RNA polymerase II transcription subunit 7 (233 aa).

A Glycyl lysine isopeptide (Lys-Gly) (interchain with G-Cter in SUMO1); alternate cross-link involves residue Lys-185. A Glycyl lysine isopeptide (Lys-Gly) (interchain with G-Cter in SUMO2); alternate cross-link involves residue Lys-185. The segment at 188 to 213 is disordered; it reads PMDADDSNNCTGQSDQQRENSGHRRD. Ser-194 is subject to Phosphoserine. Residues 203 to 213 show a composition bias toward basic and acidic residues; sequence QQRENSGHRRD.

This sequence belongs to the Mediator complex subunit 7 family. Component of the Mediator complex, which is composed of MED1, MED4, MED6, MED7, MED8, MED9, MED10, MED11, MED12, MED13, MED13L, MED14, MED15, MED16, MED17, MED18, MED19, MED20, MED21, MED22, MED23, MED24, MED25, MED26, MED27, MED29, MED30, MED31, CCNC, CDK8 and CDC2L6/CDK11. The MED12, MED13, CCNC and CDK8 subunits form a distinct module termed the CDK8 module. Mediator containing the CDK8 module is less active than Mediator lacking this module in supporting transcriptional activation. Individual preparations of the Mediator complex lacking one or more distinct subunits have been variously termed ARC, CRSP, DRIP, PC2, SMCC and TRAP.

The protein resides in the nucleus. Functionally, component of the Mediator complex, a coactivator involved in the regulated transcription of nearly all RNA polymerase II-dependent genes. Mediator functions as a bridge to convey information from gene-specific regulatory proteins to the basal RNA polymerase II transcription machinery. Mediator is recruited to promoters by direct interactions with regulatory proteins and serves as a scaffold for the assembly of a functional preinitiation complex with RNA polymerase II and the general transcription factors. The protein is Mediator of RNA polymerase II transcription subunit 7 (MED7) of Sus scrofa (Pig).